We begin with the raw amino-acid sequence, 220 residues long: Small ribosomal subunit protein uS2 (220 aa).

This sequence belongs to the universal ribosomal protein uS2 family.

The chain is Small ribosomal subunit protein uS2 from Methanococcus maripaludis (strain C5 / ATCC BAA-1333).